The chain runs to 206 residues: Large ribosomal subunit protein uL13x (206 aa).

Belongs to the universal ribosomal protein uL13 family.

The chain is Large ribosomal subunit protein uL13x (RPL13AC) from Arabidopsis thaliana (Mouse-ear cress).